Reading from the N-terminus, the 929-residue chain is Formin-like protein 11 (929 aa).

The first 28 residues, 1-28 (MMRHCRREWLLALCLISVQLLIPTGCEG), serve as a signal peptide directing secretion. The interval 153–215 (ESSTTKSIPE…KSVAEKKKDS (63 aa)) is disordered. Polar residues predominate over residues 171 to 189 (KTSTPKPVNKPTDSVSSPP). Residues 191 to 215 (RSYKSAPTEKENPPTKSVAEKKKDS) show a composition bias toward basic and acidic residues. A helical membrane pass occupies residues 222–242 (FIGLSIAGIALMAHLCLCCFM). Disordered regions lie at residues 372–472 (PVGS…ENSN) and 726–749 (AAKE…SEQT). The span at 382-447 (MQPPVMPPPI…GPPRPPPPAM (66 aa)) shows a compositional bias: pro residues. One can recognise an FH2 domain in the interval 468–898 (VENSNEAKTK…KAKAKQPSQS (431 aa)). The segment covering 738–749 (KTDDLGDKSEQT) has biased composition (basic and acidic residues).

It belongs to the formin-like family. Class-I subfamily.

The protein resides in the membrane. This Oryza sativa subsp. japonica (Rice) protein is Formin-like protein 11 (FH11).